We begin with the raw amino-acid sequence, 479 residues long: FAD-dependent monooxygenase cdmI (479 aa).

FAD is bound by residues glutamate 43, glycine 57, and arginine 116. 2 N-linked (GlcNAc...) asparagine glycosylation sites follow: asparagine 156 and asparagine 198. Positions 315 and 328 each coordinate FAD. Residues 453-473 form a helical membrane-spanning segment; it reads PFILAVLAGLGFLLTMFKQQW.

Belongs to the paxM FAD-dependent monooxygenase family. The cofactor is FAD.

The protein resides in the membrane. The catalysed reaction is verruculide C + AH2 + O2 = verruculide C epoxide + A + H2O. It functions in the pathway secondary metabolite biosynthesis; terpenoid biosynthesis. FAD-dependent monooxygenase; part of the gene cluster that mediates the biosynthesis of chrodrimanin B, a meroterpenoid that acts as a potent blocker of insect GABA-gated chloride channels. The first step of the pathway is the biosynthesis of 6-hydroxymellein by the polyketide synthase cdmE. The prenyltransferase cdmH acts as a 6-hydroxymellein 5-farnesyltransferase and produces the hydrophobic metabolite verruculide C. The FAD-dependent monooxygenase cdmI further converts verruculide C into verruculide B. The terpene cyclase cdmG then produced the pentacyclic molecule 3-hydroxypentacecilide A, the backbone structure of chrodrimanin B, via folding the farnesyl moiety of the substrate into the chair-boat conformation. The short-chain dehydrogenase/reductase cdmF functions as the 3-OH dehydrogenase that oxidizes the C-3 hydroxyl group of 3-hydroxypentacecilide A and produces chrodrimanin C, the dehydrogenated product of 3-hydroxypentacecilide A. The cytochrome P450 monooxygenase cdmJ then accepts both 3-hydroxypentacecilide A and chrodrimanin C and functions as a C-7-beta-hydroxylase to produce respectively chrodrimanin H and chrodrimanin F. The dioxygenase cdmA accepts chrodrimanin H to afford chrodrimanin E, which is further transformed to chrodrimanin A by the dioxygenase cdmD. CdmA can also accept chrodrimanin C as substrate to convert it into verruculide A, which is further converted into chrodrimanin T by cdmD. The last step of the biosynthesis is proposed to be performed by the acetyltransferase cdmC which acetylates chrodrimanin A to yield chrodrimanin B. The pathway may also lead to the production of additional shunt products, including chrodrimanins T and U. This is FAD-dependent monooxygenase cdmI from Talaromyces verruculosus (Penicillium verruculosum).